The sequence spans 562 residues: MTTTTTVKSDIEIAQEANMKKIQEIAADLNILEDELEPYGHYKGKLSLDIFKRLQNEKDGKVVLVTAINPTPAGEGKSTVTVGLGQAFNKIGKKTVIALREPSLGPTMGLKGGAAGGGFSQVVPMEDINLHFTGDIHAITTANNALAAFIDNHIQQGNTLGIDTRKIVWKRCVDLNDRALRNVVIGLGGPVQGVPREDGFDITVASEIMAVFCLATDIQDLKARLSRIVVAYNFANQPVTVKDLGVEGALTLLLKDALKPNLVQTLENTPAIIHGGPFANIAHGCNSVIATTMAAKLGDYVITEAGFGADLGAEKFLDIKARAAGIKPEAVVIVATIRALKMHGGVAKDQLKEENVDALAKGMENLQKHVETIQSFGVPFVIAINKFITDTDAEVAYLQEWCNERGYAVSLTEVWEKGGQGGVDLAEKVLKEIEKGENNYAPLYELELPLEEKIRTIAQKVYGAKDIEFAPKARKQLAQYEGEGWSNLPICMAKTQYSLSDDATKLGRPSDFIVTIRELKPSIGAGFIVALTGTMLTMPGLPKQPAALQMDVNEDGKAVGLF.

Thr-71 to Ser-78 is an ATP binding site.

The protein belongs to the formate--tetrahydrofolate ligase family.

The enzyme catalyses (6S)-5,6,7,8-tetrahydrofolate + formate + ATP = (6R)-10-formyltetrahydrofolate + ADP + phosphate. It functions in the pathway one-carbon metabolism; tetrahydrofolate interconversion. The sequence is that of Formate--tetrahydrofolate ligase from Bacillus anthracis (strain A0248).